A 473-amino-acid polypeptide reads, in one-letter code: Glutamate--tRNA ligase (473 aa).

Residues Pro-11–Gly-21 carry the 'HIGH' region motif. The short motif at Lys-240–Arg-244 is the 'KMSKS' region element. Position 243 (Lys-243) interacts with ATP.

The protein belongs to the class-I aminoacyl-tRNA synthetase family. Glutamate--tRNA ligase type 1 subfamily. In terms of assembly, monomer.

It localises to the cytoplasm. It catalyses the reaction tRNA(Glu) + L-glutamate + ATP = L-glutamyl-tRNA(Glu) + AMP + diphosphate. Its function is as follows. Catalyzes the attachment of glutamate to tRNA(Glu) in a two-step reaction: glutamate is first activated by ATP to form Glu-AMP and then transferred to the acceptor end of tRNA(Glu). The sequence is that of Glutamate--tRNA ligase from Rhodopseudomonas palustris (strain HaA2).